Consider the following 306-residue polypeptide: Homoserine O-acetyltransferase (306 aa).

C142 functions as the Acyl-thioester intermediate in the catalytic mechanism. Substrate is bound by residues K163 and S192. Catalysis depends on H235, which acts as the Proton acceptor. The active site involves E237. R249 provides a ligand contact to substrate.

It belongs to the MetA family.

The protein resides in the cytoplasm. The enzyme catalyses L-homoserine + acetyl-CoA = O-acetyl-L-homoserine + CoA. The protein operates within amino-acid biosynthesis; L-methionine biosynthesis via de novo pathway; O-acetyl-L-homoserine from L-homoserine: step 1/1. Functionally, transfers an acetyl group from acetyl-CoA to L-homoserine, forming acetyl-L-homoserine. The chain is Homoserine O-acetyltransferase from Brucella abortus (strain S19).